The primary structure comprises 61 residues: Small ribosomal subunit protein uS14 (61 aa).

4 residues coordinate Zn(2+): cysteine 24, cysteine 27, cysteine 40, and cysteine 43.

Belongs to the universal ribosomal protein uS14 family. Zinc-binding uS14 subfamily. As to quaternary structure, part of the 30S ribosomal subunit. Contacts proteins S3 and S10. Requires Zn(2+) as cofactor.

Functionally, binds 16S rRNA, required for the assembly of 30S particles and may also be responsible for determining the conformation of the 16S rRNA at the A site. In Geobacter metallireducens (strain ATCC 53774 / DSM 7210 / GS-15), this protein is Small ribosomal subunit protein uS14.